Here is a 301-residue protein sequence, read N- to C-terminus: Beta-1,3-galactosyltransferase 5 (301 aa).

Residues 1-7 lie on the Cytoplasmic side of the membrane; sequence MAFPKMR. A helical; Signal-anchor for type II membrane protein membrane pass occupies residues 8–28; sequence LMYVCLLVLGALCLYFSMYSL. Residues 29-301 are Lumenal-facing; sequence NLFKEQSFVY…LLDYWQALEN (273 aa). N-linked (GlcNAc...) asparagine glycans are attached at residues N130, N174, and N231.

This sequence belongs to the glycosyltransferase 31 family.

It localises to the golgi apparatus membrane. The enzyme catalyses a globoside Gb4Cer (d18:1(4E)) + UDP-alpha-D-galactose = a globoside GalGb4Cer (d18:1(4E)) + UDP + H(+). The protein operates within protein modification; protein glycosylation. In terms of biological role, catalyzes the transfer of Gal to GlcNAc-based acceptors with a preference for the core3 O-linked glycan GlcNAc(beta1,3)GalNAc structure. Can use glycolipid LC3Cer as an efficient acceptor. This chain is Beta-1,3-galactosyltransferase 5 (B3GALT5), found in Pan paniscus (Pygmy chimpanzee).